A 283-amino-acid chain; its full sequence is MIVVSEIADLKTIISEWKQNQETIGFCPTMGTLHDGHMDLVKTSKGQCTKTIVSIFINPTQFNDPKDFDAYPKNTESDLKLCEEHGVDLVFLPSVEVIYPKSQTPIQMSIPSLQTTLCGRTRPGHFEGVLQIVSKLFHLTEPNYGFFGLKDYQQYRIISAMVEELNFPIKILGVPTKRESDGLAMSSRNLRLSPKDRETASLIPRMFQLAKKTLLGGEKNLIVWKEILTDFLLTGSNVKIDYLEIVDPITLQPLSNLNGELLLATAVFVGEVRLIDNEVLVSP.

ATP is bound at residue 30–37 (MGTLHDGH). The active-site Proton donor is the His-37. Gln-61 is a binding site for (R)-pantoate. Beta-alanine is bound at residue Gln-61. Residue 148–151 (GLKD) coordinates ATP. Gln-154 is a binding site for (R)-pantoate. 185–188 (MSSR) provides a ligand contact to ATP.

The protein belongs to the pantothenate synthetase family. As to quaternary structure, homodimer.

The protein localises to the cytoplasm. The catalysed reaction is (R)-pantoate + beta-alanine + ATP = (R)-pantothenate + AMP + diphosphate + H(+). It functions in the pathway cofactor biosynthesis; (R)-pantothenate biosynthesis; (R)-pantothenate from (R)-pantoate and beta-alanine: step 1/1. Functionally, catalyzes the condensation of pantoate with beta-alanine in an ATP-dependent reaction via a pantoyl-adenylate intermediate. The protein is Pantothenate synthetase of Leptospira biflexa serovar Patoc (strain Patoc 1 / Ames).